We begin with the raw amino-acid sequence, 194 residues long: Putative manganese efflux pump MntP (194 aa).

6 helical membrane passes run 3–23 (PITILLIGIAMSTDAFAAAIG), 37–57 (LYVAVIFGVIETATPIAGWLL), 65–85 (IATFDHWIAFGLLSGLGIHMI), 112–132 (LAATALATSIDAAAIGISLAF), 139–159 (IVAAVIGLCTFTMVIFGVMLG), and 170–190 (AEIVGGIILIIVGSTILYEHL).

This sequence belongs to the MntP (TC 9.B.29) family.

The protein resides in the cell inner membrane. Probably functions as a manganese efflux pump. The sequence is that of Putative manganese efflux pump MntP from Xylella fastidiosa (strain 9a5c).